The primary structure comprises 421 residues: Voltage-dependent calcium channel gamma-8 subunit (421 aa).

Helical transmembrane passes span 19-39, 127-147, 157-177, and 207-227; these read VQVL…TIAI, SSIF…CVAA, IILG…IGVI, and FGGL…NIYI. Phosphoserine occurs at positions 251 and 254. The interval 271-304 is disordered; that stretch reads RRSRSSSRGSSEASPSRDASPGGPGGPGFASTDI. Over residues 276–287 the composition is skewed to low complexity; it reads SSRGSSEASPSR. Residues 318 to 338 traverse the membrane as a helical segment; the sequence is VAAGLASAGGGGGGAGVGAYG. 2 disordered regions span residues 342-363 and 378-421; these read GAAG…GFLT and VTVT…TTPV. Over residues 384–397 the composition is skewed to pro residues; the sequence is PAAPAPAPPAPAAP. Positions 408–421 are enriched in polar residues; that stretch reads ASNTNTLNRKTTPV.

It belongs to the PMP-22/EMP/MP20 family. CACNG subfamily. In terms of assembly, interacts with CACNA1C. Identified in a complex with the L-type calcium channel subunits CACNA1C, CACNA2D1 and either CACNB1 or CACNB2. Acts as an auxiliary subunit for AMPA-selective glutamate receptors (AMPARs). Found in a complex with GRIA1, GRIA2, GRIA3, GRIA4, CNIH2, CNIH3, CACNG2, CACNG3, CACNG4, CACNG5 and CACNG7. Interacts with CNIH2. Found in a complex with GRIA1, GRIA2, GRIA3, GRIA4, DLG4 and CNIH2. Post-translationally, palmitoylated. Probably palmitoylated by ZDHHC3 and ZDHHC7.

Its subcellular location is the cell membrane. It localises to the postsynaptic density membrane. In terms of biological role, regulates the activity of L-type calcium channels that contain CACNA1C as pore-forming subunit. Regulates the trafficking and gating properties of AMPA-selective glutamate receptors (AMPARs). Promotes their targeting to the cell membrane and synapses and modulates their gating properties by slowing their rates of activation, deactivation and desensitization and by mediating their resensitization. Does not show subunit-specific AMPA receptor regulation and regulates all AMPAR subunits. Thought to stabilize the calcium channel in an inactivated (closed) state. The chain is Voltage-dependent calcium channel gamma-8 subunit from Rattus norvegicus (Rat).